Consider the following 288-residue polypeptide: Small ribosomal subunit protein uS2 (288 aa).

Residues 267–288 form a disordered region; the sequence is EEVEEVEEEFIPSEIEDEDEKF.

This sequence belongs to the universal ribosomal protein uS2 family.

This chain is Small ribosomal subunit protein uS2, found in Petrotoga mobilis (strain DSM 10674 / SJ95).